The chain runs to 236 residues: CD81 antigen (236 aa).

Topologically, residues 1–12 (MGVEGCTKCIKY) are cytoplasmic. A helical transmembrane segment spans residues 13 to 33 (LLFVFNFVFWLAGGVILGVAL). At 34-63 (WLRHDPQTTTLLYLELGDKPAPSTFYVGIY) the chain is on the extracellular side. Residues 64–84 (ILIAVGAVMMFVGFLGCYGAI) traverse the membrane as a helical segment. Over 85–89 (QESQC) the chain is Cytoplasmic. The chain crosses the membrane as a helical span at residues 90-112 (LLGTFFTCLVILFACEVAAGIWG). The Extracellular portion of the chain corresponds to 113 to 201 (FVNKDQIAKD…QKIDELFSGK (89 aa)). Disulfide bonds link C156–C190 and C157–C175. Residues 202 to 224 (LYLIGIAAIVVAVIMIFEMILSM) form a helical membrane-spanning segment. Cholesterol is bound at residue E219. Topologically, residues 225–236 (VLCCGIRNSSVY) are cytoplasmic.

The protein belongs to the tetraspanin (TM4SF) family. Homodimer. Part of a complex composed of CD19, CR2/CD21, CD81 and IFITM1/CD225 in the membrane of mature B cells. Interacts (via the second extracellular domain) with CD19; this interaction is initiated early during biosynthesis in the ER and enables trafficking of only properly folded CD19. Part of a complex that includes MHC class II/HLA-DR molecules and IFITM1. Interacts with IFITM1. Interacts with IFITM2 and IFITM3. Part of integrin-tetraspanin complex composed of CD9, CD81, beta-1 and beta-2 integrins in the membrane of monocyte/macrophages. Interacts (via the second extracellular domain) with integrin ITGAV:ITGB3. Interacts with CD247/CD3 zeta, ICAM1 and CD9 at the immune synapse on T cell membrane. Part of a GPCR-tetraspanin complex consisting at least of ADGRG1, CD81, possibly CD9, and GNA11 in which CD81 enhances the association of ADGRG1 with GNA11. Part of a complex composed of CD9, CD81, PTGFRN and IGSF8. Interacts directly with IGSF8. Interacts with CD53 and SCIMP. Interacts with SAMHD1 (via its C-terminus). Interacts with glypican GPC3 and with the transcriptional repressor HHEX; binding to GPC3 decreases the availability of free CD81 for binding to HHEX, resulting in nuclear translocation of HHEX and transcriptional repression. Interacts with CLDN1. Interacts with CLDN6 and CLDN9. In terms of processing, not glycosylated. Likely constitutively palmitoylated at low levels. Protein palmitoylation is up-regulated upon coligation of BCR and CD9-C2R-CD81 complexes in lipid rafts.

It localises to the cell membrane. The protein resides in the basolateral cell membrane. In terms of biological role, structural component of specialized membrane microdomains known as tetraspanin-enriched microdomains (TERMs), which act as platforms for receptor clustering and signaling. Essential for trafficking and compartmentalization of CD19 receptor on the surface of activated B cells. Upon initial encounter with microbial pathogens, enables the assembly of CD19-CR2/CD21 and B cell receptor (BCR) complexes at signaling TERMs, lowering the threshold dose of antigen required to trigger B cell clonal expansion and antibody production. In T cells, facilitates the localization of CD247/CD3 zeta at antigen-induced synapses with B cells, providing for costimulation and polarization toward T helper type 2 phenotype. Present in MHC class II compartments, may also play a role in antigen presentation. Can act both as positive and negative regulator of homotypic or heterotypic cell-cell fusion processes. Positively regulates sperm-egg fusion and may be involved in acrosome reaction. In myoblasts, associates with CD9 and PTGFRN and inhibits myotube fusion during muscle regeneration. In macrophages, associates with CD9 and beta-1 and beta-2 integrins, and prevents macrophage fusion into multinucleated giant cells specialized in ingesting complement-opsonized large particles. Also prevents the fusion of mononuclear cell progenitors into osteoclasts in charge of bone resorption. May regulate the compartmentalization of enzymatic activities. In T cells, defines the subcellular localization of dNTPase SAMHD1 and permits its degradation by the proteasome, thereby controlling intracellular dNTP levels. Also involved in cell adhesion and motility. Positively regulates integrin-mediated adhesion of macrophages, particularly relevant for the inflammatory response in the lung. The sequence is that of CD81 antigen (Cd81) from Rattus norvegicus (Rat).